Reading from the N-terminus, the 371-residue chain is Ribosomal RNA small subunit methyltransferase H (371 aa).

Residues 43 to 45, Asp-62, Leu-96, Asp-110, and Gln-117 contribute to the S-adenosyl-L-methionine site; that span reads GGH. Residues 315 to 371 form a disordered region; sequence AAERLDPTQQQRQRTDRERYRRQVRAMHQPGTGSAVRRPVSGDDGTGTDEEGEGHDD. A compositionally biased stretch (acidic residues) spans 360–371; that stretch reads TGTDEEGEGHDD.

Belongs to the methyltransferase superfamily. RsmH family.

Its subcellular location is the cytoplasm. The catalysed reaction is cytidine(1402) in 16S rRNA + S-adenosyl-L-methionine = N(4)-methylcytidine(1402) in 16S rRNA + S-adenosyl-L-homocysteine + H(+). In terms of biological role, specifically methylates the N4 position of cytidine in position 1402 (C1402) of 16S rRNA. The chain is Ribosomal RNA small subunit methyltransferase H from Salinispora tropica (strain ATCC BAA-916 / DSM 44818 / JCM 13857 / NBRC 105044 / CNB-440).